The following is a 405-amino-acid chain: Glucose-1-phosphate adenylyltransferase 1 (405 aa).

Alpha-D-glucose 1-phosphate-binding positions include Tyr-96, Gly-161, 176 to 177 (EK), and Ser-194.

It belongs to the bacterial/plant glucose-1-phosphate adenylyltransferase family. Homotetramer.

It carries out the reaction alpha-D-glucose 1-phosphate + ATP + H(+) = ADP-alpha-D-glucose + diphosphate. Its pathway is glycan biosynthesis; glycogen biosynthesis. Functionally, involved in the biosynthesis of ADP-glucose, a building block required for the elongation reactions to produce glycogen. Catalyzes the reaction between ATP and alpha-D-glucose 1-phosphate (G1P) to produce pyrophosphate and ADP-Glc. This is Glucose-1-phosphate adenylyltransferase 1 from Vibrio cholerae serotype O1 (strain ATCC 39315 / El Tor Inaba N16961).